The following is a 193-amino-acid chain: dTTP/UTP pyrophosphatase (193 aa).

D77 serves as the catalytic Proton acceptor.

It belongs to the Maf family. YhdE subfamily. The cofactor is a divalent metal cation.

It is found in the cytoplasm. It catalyses the reaction dTTP + H2O = dTMP + diphosphate + H(+). The enzyme catalyses UTP + H2O = UMP + diphosphate + H(+). Nucleoside triphosphate pyrophosphatase that hydrolyzes dTTP and UTP. May have a dual role in cell division arrest and in preventing the incorporation of modified nucleotides into cellular nucleic acids. The sequence is that of dTTP/UTP pyrophosphatase from Bacteroides fragilis (strain ATCC 25285 / DSM 2151 / CCUG 4856 / JCM 11019 / LMG 10263 / NCTC 9343 / Onslow / VPI 2553 / EN-2).